The primary structure comprises 321 residues: MIKLLYPQFWQERNIIAYLLLPISLIYQFLSYLRTSLACPVILPAKVICVGNCSVGGTGKTQIVIYLAKLLKAKNVSFVIITKAYGSNIKSTTIIQKWHTALEVGDEGIMLAKYGTAIAAKHIKDILPLINELKPDVIIVDDFLQNPYLHKDFTIVSVDSQRLFGNRFLIPAGPLRQNPKQVLDAADLIFLVSSNQDQIPNELTPYIDKVINAQIVPSNNIDKTKNYFAFSGIGNPQRFFLTLENYRLNIVGHKTFPDHYNYLQADLENLYSLAKEHNAILITTRKDYVKFNYLNNKIICLDVELSINNPDLLNEKIFKKA.

54 to 61 (SVGGTGKT) contributes to the ATP binding site.

It belongs to the LpxK family.

It carries out the reaction a lipid A disaccharide + ATP = a lipid IVA + ADP + H(+). Its pathway is glycolipid biosynthesis; lipid IV(A) biosynthesis; lipid IV(A) from (3R)-3-hydroxytetradecanoyl-[acyl-carrier-protein] and UDP-N-acetyl-alpha-D-glucosamine: step 6/6. In terms of biological role, transfers the gamma-phosphate of ATP to the 4'-position of a tetraacyldisaccharide 1-phosphate intermediate (termed DS-1-P) to form tetraacyldisaccharide 1,4'-bis-phosphate (lipid IVA). This chain is Tetraacyldisaccharide 4'-kinase, found in Rickettsia typhi (strain ATCC VR-144 / Wilmington).